Consider the following 302-residue polypeptide: Cuticle collagen dpy-13 (302 aa).

3 triple-helical region regions span residues 106-135 (GPQGAPGAPGKPGRPGKPGAPGFPGNPGKA), 154-210 (GPPG…EGLP), and 219-278 (GEPG…PGTP). Positions 108–284 (QGAPGAPGKP…PGTPGERGIC (177 aa)) are disordered. Positions 144–159 (TPPPCKPCPQGPPGAP) are enriched in pro residues. Residues 188-197 (PKGPNGAPGK) show a composition bias toward low complexity. 2 stretches are compositionally biased toward pro residues: residues 247–257 (QPGPKGPPGPD) and 268–277 (QPGPVGPPGT).

It belongs to the cuticular collagen family. In terms of assembly, collagen polypeptide chains are complexed within the cuticle by disulfide bonds and other types of covalent cross-links.

Functionally, nematode cuticles are composed largely of collagen-like proteins. The cuticle functions both as an exoskeleton and as a barrier to protect the worm from its environment. Mutations in dpy-13 affects the body shape. This chain is Cuticle collagen dpy-13 (dpy-13), found in Caenorhabditis elegans.